We begin with the raw amino-acid sequence, 469 residues long: Cysteine protease ATG4D (469 aa).

The span at 1-29 (MNSVSPLATQYGSPKGSQQMENRSTQSGG) shows a compositional bias: polar residues. A disordered region spans residues 1–41 (MNSVSPLATQYGSPKGSQQMENRSTQSGGHEQRKMGHQDAT). The active-site Nucleophile is the cysteine 131. A disordered region spans residues 169 to 191 (IRSSSPPSMPLSSLATGHSAGDY). Low complexity predominate over residues 171-182 (SSSPPSMPLSSL). Catalysis depends on residues aspartate 356 and histidine 358. Positions 436 to 469 (QEYAEGPQSSSHPPVCRKKGPLVKRPSSDEFEFL) are disordered.

This sequence belongs to the peptidase C54 family.

It is found in the cytoplasm. It catalyses the reaction [protein]-C-terminal L-amino acid-glycyl-phosphatidylethanolamide + H2O = [protein]-C-terminal L-amino acid-glycine + a 1,2-diacyl-sn-glycero-3-phosphoethanolamine. The catalysed reaction is [protein]-C-terminal L-amino acid-glycyl-phosphatidylserine + H2O = [protein]-C-terminal L-amino acid-glycine + a 1,2-diacyl-sn-glycero-3-phospho-L-serine. Its function is as follows. Cysteine protease that plays a key role in autophagy by mediating both proteolytic activation and delipidation of ATG8 family proteins. The protease activity is required for proteolytic activation of ATG8 family proteins to reveal a C-terminal glycine. Exposure of the glycine at the C-terminus is essential for ATG8 proteins conjugation to phosphatidylethanolamine (PE) and insertion to membranes, which is necessary for autophagy. In addition to the protease activity, also mediates delipidation of ATG8 family proteins. Catalyzes delipidation of PE-conjugated forms of ATG8 proteins during macroautophagy. Also involved in non-canonical autophagy, a parallel pathway involving conjugation of ATG8 proteins to single membranes at endolysosomal compartments, by catalyzing delipidation of ATG8 proteins conjugated to phosphatidylserine (PS). This chain is Cysteine protease ATG4D, found in Xenopus laevis (African clawed frog).